Here is a 60-residue protein sequence, read N- to C-terminus: Cytotoxin SP15d (60 aa).

4 disulfide bridges follow: Cys-3–Cys-21, Cys-14–Cys-38, Cys-42–Cys-53, and Cys-54–Cys-59.

Belongs to the three-finger toxin family. Short-chain subfamily. Type IA cytotoxin sub-subfamily. In terms of assembly, monomer in solution; Homodimer and oligomer in the presence of negatively charged lipids forming a pore with a size ranging between 20 and 30 Angstroms. Expressed by the venom gland.

Its subcellular location is the secreted. It localises to the target cell membrane. In terms of biological role, shows cytolytic activity on many different cells by forming pore in lipid membranes. In vivo, increases heart rate or kills the animal by cardiac arrest. In addition, it binds to heparin with high affinity, interacts with Kv channel-interacting protein 1 (KCNIP1) in a calcium-independent manner, and binds to integrin alpha-V/beta-3 (ITGAV/ITGB3) with moderate affinity. The chain is Cytotoxin SP15d from Naja atra (Chinese cobra).